Consider the following 37-residue polypeptide: Large ribosomal subunit protein bL36 (37 aa).

This sequence belongs to the bacterial ribosomal protein bL36 family.

The chain is Large ribosomal subunit protein bL36 from Leptospira biflexa serovar Patoc (strain Patoc 1 / Ames).